The following is a 208-amino-acid chain: Mediator of RNA polymerase II transcription subunit 18 (208 aa).

Phosphoserine is present on Ser-66.

It belongs to the Mediator complex subunit 18 family. In terms of assembly, component of the Mediator complex, which is composed of MED1, MED4, MED6, MED7, MED8, MED9, MED10, MED11, MED12, MED13, MED13L, MED14, MED15, MED16, MED17, MED18, MED19, MED20, MED21, MED22, MED23, MED24, MED25, MED26, MED27, MED29, MED30, MED31, CCNC, CDK8 and CDC2L6/CDK11. The MED12, MED13, CCNC and CDK8 subunits form a distinct module termed the CDK8 module. Mediator containing the CDK8 module is less active than Mediator lacking this module in supporting transcriptional activation. Individual preparations of the Mediator complex lacking one or more distinct subunits have been variously termed ARC, CRSP, DRIP, PC2, SMCC and TRAP.

It is found in the nucleus. Component of the Mediator complex, a coactivator involved in the regulated transcription of nearly all RNA polymerase II-dependent genes. Mediator functions as a bridge to convey information from gene-specific regulatory proteins to the basal RNA polymerase II transcription machinery. Mediator is recruited to promoters by direct interactions with regulatory proteins and serves as a scaffold for the assembly of a functional preinitiation complex with RNA polymerase II and the general transcription factors. The chain is Mediator of RNA polymerase II transcription subunit 18 (MED18) from Homo sapiens (Human).